Reading from the N-terminus, the 100-residue chain is Aspartyl/glutamyl-tRNA(Asn/Gln) amidotransferase subunit C (100 aa).

It belongs to the GatC family. Heterotrimer of A, B and C subunits.

It catalyses the reaction L-glutamyl-tRNA(Gln) + L-glutamine + ATP + H2O = L-glutaminyl-tRNA(Gln) + L-glutamate + ADP + phosphate + H(+). The enzyme catalyses L-aspartyl-tRNA(Asn) + L-glutamine + ATP + H2O = L-asparaginyl-tRNA(Asn) + L-glutamate + ADP + phosphate + 2 H(+). Its function is as follows. Allows the formation of correctly charged Asn-tRNA(Asn) or Gln-tRNA(Gln) through the transamidation of misacylated Asp-tRNA(Asn) or Glu-tRNA(Gln) in organisms which lack either or both of asparaginyl-tRNA or glutaminyl-tRNA synthetases. The reaction takes place in the presence of glutamine and ATP through an activated phospho-Asp-tRNA(Asn) or phospho-Glu-tRNA(Gln). This Streptococcus pneumoniae (strain Taiwan19F-14) protein is Aspartyl/glutamyl-tRNA(Asn/Gln) amidotransferase subunit C.